A 401-amino-acid polypeptide reads, in one-letter code: Tryptophan synthase beta chain (401 aa).

Lys-92 bears the N6-(pyridoxal phosphate)lysine mark.

The protein belongs to the TrpB family. Tetramer of two alpha and two beta chains. Pyridoxal 5'-phosphate is required as a cofactor.

It catalyses the reaction (1S,2R)-1-C-(indol-3-yl)glycerol 3-phosphate + L-serine = D-glyceraldehyde 3-phosphate + L-tryptophan + H2O. The protein operates within amino-acid biosynthesis; L-tryptophan biosynthesis; L-tryptophan from chorismate: step 5/5. In terms of biological role, the beta subunit is responsible for the synthesis of L-tryptophan from indole and L-serine. The chain is Tryptophan synthase beta chain from Vesicomyosocius okutanii subsp. Calyptogena okutanii (strain HA).